A 509-amino-acid chain; its full sequence is Cytochrome P450 4X1 (509 aa).

The chain crosses the membrane as a helical span at residues 14–34 (FYLAFVFCLALGLLQAIKLYL). Cys-454 is a heme binding site.

It belongs to the cytochrome P450 family. Heme serves as cofactor. Expressed in brain, heart, kidney and skin and, at lower levels, in skeletal muscle and liver. In the brain, high levels are detected in amygdala and lower levels in globus pallidus and cerebellum. In the heart, very high levels in aorta, but very low levels in other heart regions. Also expressed in breast, prostate and colon.

It is found in the endoplasmic reticulum membrane. It localises to the microsome membrane. It carries out the reaction N-(5Z,8Z,11Z,14Z-eicosatetraenoyl)-ethanolamine + reduced [NADPH--hemoprotein reductase] + O2 = N-(14,15-epoxy-5Z,8Z,11Z-eicosatrienoyl)-ethanolamine + oxidized [NADPH--hemoprotein reductase] + H2O + H(+). In terms of biological role, a cytochrome P450 monooxygenase that selectively catalyzes the epoxidation of the last double bond of the arachidonoyl moiety of anandamide, potentially modulating endocannabinoid signaling. Has no hydroxylase activity toward various fatty acids, steroids and prostaglandins. Mechanistically, uses molecular oxygen inserting one oxygen atom into a substrate, and reducing the second into a water molecule, with two electrons provided by NADPH via cytochrome P450 reductase (CPR; NADPH-ferrihemoprotein reductase). In Homo sapiens (Human), this protein is Cytochrome P450 4X1.